Reading from the N-terminus, the 464-residue chain is Arginine biosynthesis bifunctional protein ArgJ, chloroplastic (464 aa).

Substrate contacts are provided by T208, K234, T245, E332, N459, and T464. T245 functions as the Nucleophile in the catalytic mechanism.

This sequence belongs to the ArgJ family. As to quaternary structure, heterodimer of an alpha and a beta chain.

It is found in the plastid. The protein localises to the chloroplast. It carries out the reaction N(2)-acetyl-L-ornithine + L-glutamate = N-acetyl-L-glutamate + L-ornithine. It catalyses the reaction L-glutamate + acetyl-CoA = N-acetyl-L-glutamate + CoA + H(+). Its pathway is amino-acid biosynthesis; L-arginine biosynthesis; L-ornithine and N-acetyl-L-glutamate from L-glutamate and N(2)-acetyl-L-ornithine (cyclic): step 1/1. It participates in amino-acid biosynthesis; L-arginine biosynthesis; N(2)-acetyl-L-ornithine from L-glutamate: step 1/4. Its function is as follows. Catalyzes two activities which are involved in the cyclic version of arginine biosynthesis: the synthesis of acetylglutamate from glutamate and acetyl-CoA, and of ornithine by transacetylation between acetylornithine and glutamate. This is Arginine biosynthesis bifunctional protein ArgJ, chloroplastic from Zea mays (Maize).